Reading from the N-terminus, the 419-residue chain is Altered inheritance of mitochondria protein 6 (419 aa).

The first 31 residues, 1 to 31 (MLPPFIVAGLFSSYILIMGLMFSQISHVSNS), serve as a signal peptide directing secretion.

It belongs to the AIM6 family.

The sequence is that of Altered inheritance of mitochondria protein 6 (AIM6) from Kluyveromyces lactis (strain ATCC 8585 / CBS 2359 / DSM 70799 / NBRC 1267 / NRRL Y-1140 / WM37) (Yeast).